A 737-amino-acid polypeptide reads, in one-letter code: Pentatricopeptide repeat-containing protein At3g49740 (737 aa).

19 PPR repeats span residues 20–55 (TLLN…TLRP), 56–90 (DQYS…GLLC), 91–121 (HSHV…IDEP), 122–152 (DVYS…MPER), 154–188 (DVAI…GVRH), 189–222 (DKFG…GFFI), 223–253 (ASSV…TDVA), 256–289 (DQVT…SLRP), 290–321 (TDLT…GYEK), 322–352 (YTLV…LEEK), 353–387 (DLVT…GVKP), 388–418 (DEFT…FGLS), 420–454 (KIEI…NLIS), 455–485 (WNAI…EVRI), 488–522 (DAYT…GQFK), 523–553 (ETLI…MSEK), 554–588 (DVVS…GKVI), 590–620 (DAAT…MVEF), and 626–656 (NVDH…SEKT). The interval 663-737 (VWWALFSACA…KQRGCSWMRL (75 aa)) is type E motif; degenerate.

Belongs to the PPR family. PCMP-E subfamily.

The polypeptide is Pentatricopeptide repeat-containing protein At3g49740 (PCMP-E84) (Arabidopsis thaliana (Mouse-ear cress)).